A 185-amino-acid polypeptide reads, in one-letter code: NOP protein chaperone 1 (185 aa).

Ser-34, Ser-66, and Ser-177 each carry phosphoserine. The interval 121-185 (SRSDSKEEDS…DSPASKKKKQ (65 aa)) is disordered.

Interacts with NOP58, RUVBL1 and RUVBL2; the interactions are direct and NOPCHAP1 bridges the association of NOP58 with RUVBL1:RUVBL2 even in absence of snoRNAs. The interactions with RUVBL1 and RUVBL2 are disrupted upon ATP binding.

Its subcellular location is the nucleus. Client-loading PAQosome/R2TP complex cofactor that selects NOP58 to promote box C/D small nucleolar ribonucleoprotein (snoRNP) assembly. Acts as a bridge between NOP58 and the R2TP complex via RUVBL1:RUVBL2. The polypeptide is NOP protein chaperone 1 (Mus musculus (Mouse)).